Consider the following 320-residue polypeptide: Cytochrome f (320 aa).

Positions 1-35 are cleaved as a signal peptide; that stretch reads MQTRNTFSWIREEITRSISVSLMIYIITWASISSA. Y36, C56, C59, and H60 together coordinate heme. The helical transmembrane segment at 286–306 threads the bilayer; it reads VQGLLFFLGSVVLAQIFLVLK.

This sequence belongs to the cytochrome f family. As to quaternary structure, the 4 large subunits of the cytochrome b6-f complex are cytochrome b6, subunit IV (17 kDa polypeptide, petD), cytochrome f and the Rieske protein, while the 4 small subunits are PetG, PetL, PetM and PetN. The complex functions as a dimer. It depends on heme as a cofactor.

The protein resides in the plastid. Its subcellular location is the chloroplast thylakoid membrane. Its function is as follows. Component of the cytochrome b6-f complex, which mediates electron transfer between photosystem II (PSII) and photosystem I (PSI), cyclic electron flow around PSI, and state transitions. The sequence is that of Cytochrome f from Nasturtium officinale (Watercress).